The sequence spans 406 residues: Tyrosine--tRNA ligase (406 aa).

Residue Y35 participates in L-tyrosine binding. The short motif at 40-49 is the 'HIGH' region element; it reads PTADSLHVGH. Residues Y168 and Q172 each coordinate L-tyrosine. Positions 228–232 match the 'KMSKS' region motif; sequence KMGKT. An ATP-binding site is contributed by K231. Residues 340–404 enclose the S4 RNA-binding domain; the sequence is SELLDILVEA…RGKKNYNKIV (65 aa).

This sequence belongs to the class-I aminoacyl-tRNA synthetase family. TyrS type 1 subfamily. Homodimer.

It is found in the cytoplasm. It catalyses the reaction tRNA(Tyr) + L-tyrosine + ATP = L-tyrosyl-tRNA(Tyr) + AMP + diphosphate + H(+). In terms of biological role, catalyzes the attachment of tyrosine to tRNA(Tyr) in a two-step reaction: tyrosine is first activated by ATP to form Tyr-AMP and then transferred to the acceptor end of tRNA(Tyr). The polypeptide is Tyrosine--tRNA ligase (Clostridium perfringens (strain SM101 / Type A)).